The sequence spans 460 residues: Serine--tRNA ligase (460 aa).

Residue 255–257 (TAE) coordinates L-serine. Residues 286-288 (RKE) and V302 each bind ATP. E309 lines the L-serine pocket. Residue 373–376 (EMVS) coordinates ATP. T409 is an L-serine binding site.

The protein belongs to the class-II aminoacyl-tRNA synthetase family. Type-1 seryl-tRNA synthetase subfamily. Homodimer. The tRNA molecule binds across the dimer.

The protein localises to the cytoplasm. The catalysed reaction is tRNA(Ser) + L-serine + ATP = L-seryl-tRNA(Ser) + AMP + diphosphate + H(+). It carries out the reaction tRNA(Sec) + L-serine + ATP = L-seryl-tRNA(Sec) + AMP + diphosphate + H(+). It functions in the pathway aminoacyl-tRNA biosynthesis; selenocysteinyl-tRNA(Sec) biosynthesis; L-seryl-tRNA(Sec) from L-serine and tRNA(Sec): step 1/1. Catalyzes the attachment of serine to tRNA(Ser). Is also able to aminoacylate tRNA(Sec) with serine, to form the misacylated tRNA L-seryl-tRNA(Sec), which will be further converted into selenocysteinyl-tRNA(Sec). The sequence is that of Serine--tRNA ligase from Aeropyrum pernix (strain ATCC 700893 / DSM 11879 / JCM 9820 / NBRC 100138 / K1).